The chain runs to 216 residues: Ribose-5-phosphate isomerase A (216 aa).

Residues 26 to 29 (TGST), 79 to 82 (DGAD), and 92 to 95 (KGGG) each bind substrate. Glutamate 101 functions as the Proton acceptor in the catalytic mechanism. Lysine 119 is a binding site for substrate.

The protein belongs to the ribose 5-phosphate isomerase family. In terms of assembly, homodimer.

It catalyses the reaction aldehydo-D-ribose 5-phosphate = D-ribulose 5-phosphate. It participates in carbohydrate degradation; pentose phosphate pathway; D-ribose 5-phosphate from D-ribulose 5-phosphate (non-oxidative stage): step 1/1. Its function is as follows. Catalyzes the reversible conversion of ribose-5-phosphate to ribulose 5-phosphate. The protein is Ribose-5-phosphate isomerase A of Legionella pneumophila (strain Paris).